Consider the following 536-residue polypeptide: Ribulokinase (536 aa).

The protein belongs to the ribulokinase family.

The enzyme catalyses D-ribulose + ATP = D-ribulose 5-phosphate + ADP + H(+). It carries out the reaction L-ribulose + ATP = L-ribulose 5-phosphate + ADP + H(+). It participates in carbohydrate degradation; L-arabinose degradation via L-ribulose; D-xylulose 5-phosphate from L-arabinose (bacterial route): step 2/3. The sequence is that of Ribulokinase from Staphylococcus epidermidis (strain ATCC 35984 / DSM 28319 / BCRC 17069 / CCUG 31568 / BM 3577 / RP62A).